Reading from the N-terminus, the 307-residue chain is UDP-3-O-acyl-N-acetylglucosamine deacetylase (307 aa).

3 residues coordinate Zn(2+): histidine 78, histidine 241, and aspartate 245. Histidine 268 functions as the Proton donor in the catalytic mechanism.

This sequence belongs to the LpxC family. Zn(2+) serves as cofactor.

It carries out the reaction a UDP-3-O-[(3R)-3-hydroxyacyl]-N-acetyl-alpha-D-glucosamine + H2O = a UDP-3-O-[(3R)-3-hydroxyacyl]-alpha-D-glucosamine + acetate. The protein operates within glycolipid biosynthesis; lipid IV(A) biosynthesis; lipid IV(A) from (3R)-3-hydroxytetradecanoyl-[acyl-carrier-protein] and UDP-N-acetyl-alpha-D-glucosamine: step 2/6. In terms of biological role, catalyzes the hydrolysis of UDP-3-O-myristoyl-N-acetylglucosamine to form UDP-3-O-myristoylglucosamine and acetate, the committed step in lipid A biosynthesis. The chain is UDP-3-O-acyl-N-acetylglucosamine deacetylase from Bordetella bronchiseptica (strain ATCC BAA-588 / NCTC 13252 / RB50) (Alcaligenes bronchisepticus).